Consider the following 449-residue polypeptide: Glucose-6-phosphate isomerase (449 aa).

E291 serves as the catalytic Proton donor. Active-site residues include H312 and K426.

The protein belongs to the GPI family.

The protein resides in the cytoplasm. It catalyses the reaction alpha-D-glucose 6-phosphate = beta-D-fructose 6-phosphate. The protein operates within carbohydrate biosynthesis; gluconeogenesis. Its pathway is carbohydrate degradation; glycolysis; D-glyceraldehyde 3-phosphate and glycerone phosphate from D-glucose: step 2/4. In terms of biological role, catalyzes the reversible isomerization of glucose-6-phosphate to fructose-6-phosphate. The polypeptide is Glucose-6-phosphate isomerase (Streptococcus pyogenes serotype M4 (strain MGAS10750)).